Consider the following 89-residue polypeptide: Small ribosomal subunit protein uS15 (89 aa).

It belongs to the universal ribosomal protein uS15 family. In terms of assembly, part of the 30S ribosomal subunit. Forms a bridge to the 50S subunit in the 70S ribosome, contacting the 23S rRNA.

Functionally, one of the primary rRNA binding proteins, it binds directly to 16S rRNA where it helps nucleate assembly of the platform of the 30S subunit by binding and bridging several RNA helices of the 16S rRNA. In terms of biological role, forms an intersubunit bridge (bridge B4) with the 23S rRNA of the 50S subunit in the ribosome. The polypeptide is Small ribosomal subunit protein uS15 (Pediococcus pentosaceus (strain ATCC 25745 / CCUG 21536 / LMG 10740 / 183-1w)).